We begin with the raw amino-acid sequence, 550 residues long: Chaperonin GroEL (550 aa).

Residues 30 to 33, K51, 87 to 91, G416, 480 to 482, and D496 each bind ATP; these read TLGP, DGTTT, and NVA. A disordered region spans residues 525-550; that stretch reads LPKKDDEGGGGDMGGMGGMGGMGGMM. Residues 534–550 are compositionally biased toward gly residues; it reads GGDMGGMGGMGGMGGMM.

This sequence belongs to the chaperonin (HSP60) family. Forms a cylinder of 14 subunits composed of two heptameric rings stacked back-to-back. Interacts with the co-chaperonin GroES.

It localises to the cytoplasm. The catalysed reaction is ATP + H2O + a folded polypeptide = ADP + phosphate + an unfolded polypeptide.. Its function is as follows. Together with its co-chaperonin GroES, plays an essential role in assisting protein folding. The GroEL-GroES system forms a nano-cage that allows encapsulation of the non-native substrate proteins and provides a physical environment optimized to promote and accelerate protein folding. This chain is Chaperonin GroEL, found in Halorhodospira halophila (strain DSM 244 / SL1) (Ectothiorhodospira halophila (strain DSM 244 / SL1)).